The sequence spans 601 residues: DNA ligase (601 aa).

D258 lines the ATP pocket. K260 functions as the N6-AMP-lysine intermediate in the catalytic mechanism. Positions 265, 280, 310, 350, 427, and 433 each coordinate ATP.

The protein belongs to the ATP-dependent DNA ligase family. Interacts with the PCNA heterotrimer, probably via subunit PCNA3. A divalent metal cation serves as cofactor.

It catalyses the reaction ATP + (deoxyribonucleotide)n-3'-hydroxyl + 5'-phospho-(deoxyribonucleotide)m = (deoxyribonucleotide)n+m + AMP + diphosphate.. With respect to regulation, ligase activity stimulated by PCNA heterotrimer. In terms of biological role, DNA ligase that seals nicks in double-stranded DNA during DNA replication, DNA recombination and DNA repair. Interaction with PCNA enhances ligase activity. DNA polymerase I, DNA ligase and the flap endonuclease may be constitutively associated with the PCNA heterotrimer forming a scanning complex able to couple DNA synthesis and Okazaki fragment maturation. This Saccharolobus solfataricus (strain ATCC 35092 / DSM 1617 / JCM 11322 / P2) (Sulfolobus solfataricus) protein is DNA ligase.